Here is a 386-residue protein sequence, read N- to C-terminus: Palmitoyltransferase ZDHHC9 (386 aa).

Topologically, residues Met-1 to Lys-35 are cytoplasmic. The helical transmembrane segment at Gly-36 to Glu-56 threads the bilayer. The Lumenal segment spans residues Cys-57–His-63. The helical transmembrane segment at Leu-64 to Leu-84 threads the bilayer. Over Arg-85 to Tyr-183 the chain is Cytoplasmic. One can recognise a DHHC domain in the interval Lys-139–Leu-189. Cys-169 (S-palmitoyl cysteine intermediate) is an active-site residue. The chain crosses the membrane as a helical span at residues Phe-184–Val-204. Over His-205 to Gly-224 the chain is Lumenal. A helical membrane pass occupies residues Thr-225 to Phe-245. Topologically, residues His-246–His-386 are cytoplasmic. Positions Ser-306–Ser-334 are enriched in polar residues. Residues Ser-306–His-386 form a disordered region.

This sequence belongs to the DHHC palmitoyltransferase family. ERF2/ZDHHC9 subfamily.

The protein resides in the endoplasmic reticulum membrane. The protein localises to the golgi apparatus membrane. The catalysed reaction is L-cysteinyl-[protein] + hexadecanoyl-CoA = S-hexadecanoyl-L-cysteinyl-[protein] + CoA. Palmitoyltransferase that catalyzes the addition of palmitate onto various protein substrates, such as ADRB2, GSDMD, HRAS, NRAS and CGAS. The sequence is that of Palmitoyltransferase ZDHHC9 from Danio rerio (Zebrafish).